The primary structure comprises 144 residues: Maximins 3/H2 (144 aa).

The signal sequence occupies residues 1–18 (MNFKYIVAVSFLIASAYA). Propeptides lie at residues 19 to 43 (RSVQ…REIR) and 74 to 123 (TAEE…KEKR). Position 143 is an isoleucine amide (Ile-143).

This sequence belongs to the bombinin family. Expressed by the skin glands.

It localises to the secreted. Its function is as follows. Maximin-3 shows antibacterial activity against both Gram-positive and Gram-negative bacteria. It also shows antimicrobial activity against the fungus C.albicans, but not against A.flavus nor P.uticale. It has little hemolytic activity. It possess a significant cytotoxicity against tumor cell lines. It possess a significant anti-HIV activity. It shows high spermicidal activity. In terms of biological role, maximin-H2 shows antibacterial activity against both Gram-positive and Gram-negative bacteria. It also shows antimicrobial activity against the fungus C.albicans. Shows strong hemolytic activity. This chain is Maximins 3/H2, found in Bombina maxima (Giant fire-bellied toad).